The primary structure comprises 273 residues: Oxidized low-density lipoprotein receptor 1 (273 aa).

Positions Met1–Lys22 are disordered. Residues Met1–Cys36 are Cytoplasmic-facing. S-palmitoyl cysteine attachment occurs at residues Cys36 and Cys46. The helical; Signal-anchor for type II membrane protein transmembrane segment at Leu37–Gly57 threads the bilayer. The segment at Met58–Trp150 is neck. Residues Met58 to Gln273 lie on the Extracellular side of the membrane. Positions Ser64 to Leu123 form a coiled coil. An N-linked (GlcNAc...) asparagine glycan is attached at Asn73. The N-linked (GlcNAc...) (complex) asparagine glycan is linked to Asn139. Disulfide bonds link Cys144–Cys155, Cys172–Cys264, and Cys243–Cys256. Positions His151–Gln265 constitute a C-type lectin domain.

In terms of assembly, homodimer; disulfide-linked. May form a hexamer composed of 3 homodimers. Interacts with HSP70. As to quaternary structure, (Microbial infection) Binds to the head and beginning of the coiled stalk of N.meningitidis adhesin A (nadA) variant 3; binding can be abrogated by monoclonal antibodies against the specific regions of NadA. Binding occurs in protein microarrays, in solution and when LOX-1 is expressed on the cell surface. The intrachain disulfide-bonds prevent N-glycosylation at some sites. Post-translationally, N-glycosylated. As to expression, expressed at high level in endothelial cells and vascular-rich organs such as placenta, lung, liver and brain, aortic intima, bone marrow, spinal cord and substantia nigra. Also expressed at the surface of dendritic cells. Widely expressed at intermediate and low level.

Its subcellular location is the cell membrane. The protein resides in the membrane raft. It localises to the secreted. In terms of biological role, receptor that mediates the recognition, internalization and degradation of oxidatively modified low density lipoprotein (oxLDL) by vascular endothelial cells. OxLDL is a marker of atherosclerosis that induces vascular endothelial cell activation and dysfunction, resulting in pro-inflammatory responses, pro-oxidative conditions and apoptosis. Its association with oxLDL induces the activation of NF-kappa-B through an increased production of intracellular reactive oxygen and a variety of pro-atherogenic cellular responses including a reduction of nitric oxide (NO) release, monocyte adhesion and apoptosis. In addition to binding oxLDL, it acts as a receptor for the HSP70 protein involved in antigen cross-presentation to naive T-cells in dendritic cells, thereby participating in cell-mediated antigen cross-presentation. Also involved in inflammatory process, by acting as a leukocyte-adhesion molecule at the vascular interface in endotoxin-induced inflammation. Also acts as a receptor for advanced glycation end (AGE) products, activated platelets, monocytes, apoptotic cells and both Gram-negative and Gram-positive bacteria. Functionally, (Microbial infection) May serve as a receptor for adhesin A variant 3 (nadA) of N.meningitidis. This is Oxidized low-density lipoprotein receptor 1 (OLR1) from Homo sapiens (Human).